A 162-amino-acid chain; its full sequence is NADH-quinone oxidoreductase subunit I (162 aa).

2 consecutive 4Fe-4S ferredoxin-type domains span residues 52-82 (LRRY…IEAG) and 93-122 (TRYD…EGPN). Residues Cys62, Cys65, Cys68, Cys72, Cys102, Cys105, Cys108, and Cys112 each contribute to the [4Fe-4S] cluster site.

It belongs to the complex I 23 kDa subunit family. NDH-1 is composed of 14 different subunits. Subunits NuoA, H, J, K, L, M, N constitute the membrane sector of the complex. It depends on [4Fe-4S] cluster as a cofactor.

It is found in the cell inner membrane. The enzyme catalyses a quinone + NADH + 5 H(+)(in) = a quinol + NAD(+) + 4 H(+)(out). Its function is as follows. NDH-1 shuttles electrons from NADH, via FMN and iron-sulfur (Fe-S) centers, to quinones in the respiratory chain. The immediate electron acceptor for the enzyme in this species is believed to be ubiquinone. Couples the redox reaction to proton translocation (for every two electrons transferred, four hydrogen ions are translocated across the cytoplasmic membrane), and thus conserves the redox energy in a proton gradient. The chain is NADH-quinone oxidoreductase subunit I from Xanthobacter autotrophicus (strain ATCC BAA-1158 / Py2).